The sequence spans 231 residues: MAHPVHVGLKEATSPFMEELIAFHDHTLMIIFLISSLVLYIISMMLTTKLTHTSTMNAQEIEIIWTILPAIILIMIALPSLRILYMTDEFNKPYLTLKAIGHQWYWSYEYSDYVDLAFDSYIMPTYFLEPGEFRLLEVDNRTTLPMEADIRMLISSQDVLHSWAVPSXGVKADAIPGRLNQAMLASMRPGLFYGQCSEICGSNHCFMPIVLEFSYFXDFETWASYLYIVSL.

Topologically, residues 1–14 (MAHPVHVGLKEATS) are mitochondrial intermembrane. The chain crosses the membrane as a helical span at residues 15–45 (PFMEELIAFHDHTLMIIFLISSLVLYIISMM). At 46 to 59 (LTTKLTHTSTMNAQ) the chain is on the mitochondrial matrix side. A helical transmembrane segment spans residues 60 to 87 (EIEIIWTILPAIILIMIALPSLRILYMT). Over 88–231 (DEFNKPYLTL…WASYLYIVSL (144 aa)) the chain is Mitochondrial intermembrane. 6 residues coordinate Cu cation: histidine 161, cysteine 196, glutamate 198, cysteine 200, histidine 204, and methionine 207. Position 198 (glutamate 198) interacts with Mg(2+).

Belongs to the cytochrome c oxidase subunit 2 family. Component of the cytochrome c oxidase (complex IV, CIV), a multisubunit enzyme composed of 14 subunits. The complex is composed of a catalytic core of 3 subunits MT-CO1, MT-CO2 and MT-CO3, encoded in the mitochondrial DNA, and 11 supernumerary subunits COX4I, COX5A, COX5B, COX6A, COX6B, COX6C, COX7A, COX7B, COX7C, COX8 and NDUFA4, which are encoded in the nuclear genome. The complex exists as a monomer or a dimer and forms supercomplexes (SCs) in the inner mitochondrial membrane with NADH-ubiquinone oxidoreductase (complex I, CI) and ubiquinol-cytochrome c oxidoreductase (cytochrome b-c1 complex, complex III, CIII), resulting in different assemblies (supercomplex SCI(1)III(2)IV(1) and megacomplex MCI(2)III(2)IV(2)). Found in a complex with TMEM177, COA6, COX18, COX20, SCO1 and SCO2. Interacts with TMEM177 in a COX20-dependent manner. Interacts with COX20. Interacts with COX16. Cu cation is required as a cofactor.

The protein resides in the mitochondrion inner membrane. The catalysed reaction is 4 Fe(II)-[cytochrome c] + O2 + 8 H(+)(in) = 4 Fe(III)-[cytochrome c] + 2 H2O + 4 H(+)(out). Component of the cytochrome c oxidase, the last enzyme in the mitochondrial electron transport chain which drives oxidative phosphorylation. The respiratory chain contains 3 multisubunit complexes succinate dehydrogenase (complex II, CII), ubiquinol-cytochrome c oxidoreductase (cytochrome b-c1 complex, complex III, CIII) and cytochrome c oxidase (complex IV, CIV), that cooperate to transfer electrons derived from NADH and succinate to molecular oxygen, creating an electrochemical gradient over the inner membrane that drives transmembrane transport and the ATP synthase. Cytochrome c oxidase is the component of the respiratory chain that catalyzes the reduction of oxygen to water. Electrons originating from reduced cytochrome c in the intermembrane space (IMS) are transferred via the dinuclear copper A center (CU(A)) of subunit 2 and heme A of subunit 1 to the active site in subunit 1, a binuclear center (BNC) formed by heme A3 and copper B (CU(B)). The BNC reduces molecular oxygen to 2 water molecules using 4 electrons from cytochrome c in the IMS and 4 protons from the mitochondrial matrix. The polypeptide is Cytochrome c oxidase subunit 2 (MT-CO2) (Brachyteles hypoxanthus (Northern muriqui)).